The sequence spans 169 residues: NAD(P)H-quinone oxidoreductase subunit J, chloroplastic (169 aa).

It belongs to the complex I 30 kDa subunit family. In terms of assembly, NDH is composed of at least 16 different subunits, 5 of which are encoded in the nucleus.

Its subcellular location is the plastid. It is found in the chloroplast thylakoid membrane. The enzyme catalyses a plastoquinone + NADH + (n+1) H(+)(in) = a plastoquinol + NAD(+) + n H(+)(out). The catalysed reaction is a plastoquinone + NADPH + (n+1) H(+)(in) = a plastoquinol + NADP(+) + n H(+)(out). In terms of biological role, NDH shuttles electrons from NAD(P)H:plastoquinone, via FMN and iron-sulfur (Fe-S) centers, to quinones in the photosynthetic chain and possibly in a chloroplast respiratory chain. The immediate electron acceptor for the enzyme in this species is believed to be plastoquinone. Couples the redox reaction to proton translocation, and thus conserves the redox energy in a proton gradient. In Zygnema circumcarinatum (Green alga), this protein is NAD(P)H-quinone oxidoreductase subunit J, chloroplastic.